We begin with the raw amino-acid sequence, 163 residues long: Cyclic pyranopterin monophosphate synthase (163 aa).

Substrate contacts are provided by residues 75-77 and 113-114; these read LCH and ME. Aspartate 128 is a catalytic residue.

Belongs to the MoaC family. Homohexamer; trimer of dimers.

The enzyme catalyses (8S)-3',8-cyclo-7,8-dihydroguanosine 5'-triphosphate = cyclic pyranopterin phosphate + diphosphate. It participates in cofactor biosynthesis; molybdopterin biosynthesis. Its function is as follows. Catalyzes the conversion of (8S)-3',8-cyclo-7,8-dihydroguanosine 5'-triphosphate to cyclic pyranopterin monophosphate (cPMP). The polypeptide is Cyclic pyranopterin monophosphate synthase (Jannaschia sp. (strain CCS1)).